The sequence spans 409 residues: Serine/threonine transporter SstT (409 aa).

Transmembrane regions (helical) follow at residues 24–44 (LALGIVIGSVSPQLGLAAGLF), 48–68 (FVGALKAVAPVLVFILVAATI), 82–102 (IIVLYLIGTFSAALTAVIAGM), 142–162 (AIANANYIGILAWALVLGAAL), 194–214 (LGIFGLVSSTIAETGFGALAG), 218–238 (LLAVLLGCMAFIALVVNPAIV), 292–312 (IPLGATVNMGGAAITITVLAM), 319–339 (GIQVDFATALLLSLVATVSAC), and 365–385 (VAMQVVAVGFIIGVIQDSAET).

It belongs to the dicarboxylate/amino acid:cation symporter (DAACS) (TC 2.A.23) family.

The protein resides in the cell inner membrane. It carries out the reaction L-serine(in) + Na(+)(in) = L-serine(out) + Na(+)(out). The enzyme catalyses L-threonine(in) + Na(+)(in) = L-threonine(out) + Na(+)(out). Functionally, involved in the import of serine and threonine into the cell, with the concomitant import of sodium (symport system). The protein is Serine/threonine transporter SstT of Neisseria meningitidis serogroup C (strain 053442).